The sequence spans 1525 residues: Dicer-like protein 1 (1525 aa).

Over residues Asp-37–Glu-52 the composition is skewed to acidic residues. A disordered region spans residues Asp-37–Arg-65. A Helicase ATP-binding domain is found at Leu-124–Leu-305. Leu-137–Thr-144 provides a ligand contact to ATP. The DEAH box motif lies at Asp-250–His-253. In terms of domain architecture, Helicase C-terminal spans Gln-439–Arg-605. Residues Ala-641 to Ala-731 form the Dicer dsRNA-binding fold domain. In terms of domain architecture, PAZ spans Glu-881–Ala-1009. 2 RNase III domains span residues Leu-1032–Gly-1192 and Ser-1243–Asp-1394. Residues Glu-1283, Asp-1380, and Glu-1383 each contribute to the Mg(2+) site. In terms of domain architecture, DRBM spans Thr-1428–Glu-1496. 4 residues coordinate Zn(2+): Cys-1440, His-1467, Cys-1508, and Cys-1510.

This sequence belongs to the helicase family. Dicer subfamily. Mg(2+) is required as a cofactor. The cofactor is Mn(2+).

Dicer-like endonuclease involved in cleaving double-stranded RNA in the RNA interference (RNAi) pathway. Produces 21 to 25 bp dsRNAs (siRNAs) which target the selective destruction of homologous RNAs leading to sequence-specific suppression of gene expression, called post-transcriptional gene silencing (PTGS). Part of a broad host defense response against viral infection and transposons. The sequence is that of Dicer-like protein 1 (dcl1) from Aspergillus niger (strain ATCC MYA-4892 / CBS 513.88 / FGSC A1513).